Reading from the N-terminus, the 212-residue chain is Phosphoribosylglycinamide formyltransferase (212 aa).

Residue 12 to 14 coordinates N(1)-(5-phospho-beta-D-ribosyl)glycinamide; that stretch reads GTN. (6R)-10-formyltetrahydrofolate is bound by residues 90-93 and Asn-107; that span reads MKIL. The active-site Proton donor is His-109.

It belongs to the GART family.

It carries out the reaction N(1)-(5-phospho-beta-D-ribosyl)glycinamide + (6R)-10-formyltetrahydrofolate = N(2)-formyl-N(1)-(5-phospho-beta-D-ribosyl)glycinamide + (6S)-5,6,7,8-tetrahydrofolate + H(+). It participates in purine metabolism; IMP biosynthesis via de novo pathway; N(2)-formyl-N(1)-(5-phospho-D-ribosyl)glycinamide from N(1)-(5-phospho-D-ribosyl)glycinamide (10-formyl THF route): step 1/1. In terms of biological role, catalyzes the transfer of a formyl group from 10-formyltetrahydrofolate to 5-phospho-ribosyl-glycinamide (GAR), producing 5-phospho-ribosyl-N-formylglycinamide (FGAR) and tetrahydrofolate. The protein is Phosphoribosylglycinamide formyltransferase of Haemophilus influenzae (strain ATCC 51907 / DSM 11121 / KW20 / Rd).